The chain runs to 388 residues: Flap endonuclease 1 (388 aa).

An N-domain region spans residues 1–104 (MGILGLSKLI…GELAKRAERR (104 aa)). Residue D34 coordinates Mg(2+). DNA is bound by residues R47 and R70. Residues D86, E158, E160, D179, and D181 each contribute to the Mg(2+) site. Residues 122 to 253 (EIEKFNRRLV…KRAIELIKTY (132 aa)) are I-domain. E158 is a binding site for DNA. DNA contacts are provided by G231 and D233. D233 contributes to the Mg(2+) binding site. The tract at residues 336–344 (TQVRLDSFF) is interaction with PCNA. A disordered region spans residues 351 to 388 (PNATAAAKRKAEEIKKSANNKKAKTSGGSGAARGRRPK).

Belongs to the XPG/RAD2 endonuclease family. FEN1 subfamily. In terms of assembly, interacts with PCNA. Three molecules of FEN1 bind to one PCNA trimer with each molecule binding to one PCNA monomer. PCNA stimulates the nuclease activity without altering cleavage specificity. Mg(2+) serves as cofactor. Post-translationally, phosphorylated. Phosphorylation upon DNA damage induces relocalization to the nuclear plasma.

It is found in the nucleus. Its subcellular location is the nucleolus. The protein resides in the nucleoplasm. The protein localises to the mitochondrion. Functionally, structure-specific nuclease with 5'-flap endonuclease and 5'-3' exonuclease activities involved in DNA replication and repair. During DNA replication, cleaves the 5'-overhanging flap structure that is generated by displacement synthesis when DNA polymerase encounters the 5'-end of a downstream Okazaki fragment. It enters the flap from the 5'-end and then tracks to cleave the flap base, leaving a nick for ligation. Also involved in the long patch base excision repair (LP-BER) pathway, by cleaving within the apurinic/apyrimidinic (AP) site-terminated flap. Acts as a genome stabilization factor that prevents flaps from equilibrating into structures that lead to duplications and deletions. Also possesses 5'-3' exonuclease activity on nicked or gapped double-stranded DNA, and exhibits RNase H activity. Also involved in replication and repair of rDNA and in repairing mitochondrial DNA. In Drosophila mojavensis (Fruit fly), this protein is Flap endonuclease 1.